A 157-amino-acid polypeptide reads, in one-letter code: Transcriptional repressor NrdR (157 aa).

A zinc finger spans residues 3–34 (CPFCGHMESQVKDSRPSEDGAAIRRRRLCPEC). One can recognise an ATP-cone domain in the interval 49–139 (LTIVKRSGRR…VYRDFRETSD (91 aa)).

Belongs to the NrdR family. Zn(2+) serves as cofactor.

Its function is as follows. Negatively regulates transcription of bacterial ribonucleotide reductase nrd genes and operons by binding to NrdR-boxes. The sequence is that of Transcriptional repressor NrdR from Caulobacter sp. (strain K31).